The sequence spans 368 residues: Putative potassium channel KAT5 (368 aa).

Transmembrane regions (helical) follow at residues 33–53 (WWHMFLIMLVLYSAWASPFEL), 97–117 (LLNLLRLWRLRCASKLFARVE), and 132–152 (LLCVTLFALHFAACIYLWMVF). The pore-forming intramembrane region spans 180-199 (CAVYWSITTLATVGYGDLHA). The chain crosses the membrane as a helical span at residues 206–226 (LFSIAFMLFNMGLTSYIIGNI). Residue 225-344 (NITNLVVRET…CIVFSNFILV (120 aa)) coordinates a nucleoside 3',5'-cyclic phosphate.

The protein belongs to the potassium channel family. Plant (TC 1.A.1.4) subfamily.

The protein localises to the membrane. In terms of biological role, putative inward-rectifying potassium channel. This is Putative potassium channel KAT5 from Oryza sativa subsp. japonica (Rice).